Here is a 249-residue protein sequence, read N- to C-terminus: 3-deoxy-manno-octulosonate cytidylyltransferase (249 aa).

The protein belongs to the KdsB family.

It localises to the cytoplasm. The catalysed reaction is 3-deoxy-alpha-D-manno-oct-2-ulosonate + CTP = CMP-3-deoxy-beta-D-manno-octulosonate + diphosphate. Its pathway is nucleotide-sugar biosynthesis; CMP-3-deoxy-D-manno-octulosonate biosynthesis; CMP-3-deoxy-D-manno-octulosonate from 3-deoxy-D-manno-octulosonate and CTP: step 1/1. It participates in bacterial outer membrane biogenesis; lipopolysaccharide biosynthesis. Functionally, activates KDO (a required 8-carbon sugar) for incorporation into bacterial lipopolysaccharide in Gram-negative bacteria. The protein is 3-deoxy-manno-octulosonate cytidylyltransferase of Oleidesulfovibrio alaskensis (strain ATCC BAA-1058 / DSM 17464 / G20) (Desulfovibrio alaskensis).